Reading from the N-terminus, the 2294-residue chain is Protein Ycf2 (2294 aa).

Residue 1648–1655 (GSIGTGRS) coordinates ATP.

It belongs to the Ycf2 family.

The protein localises to the plastid. The protein resides in the chloroplast stroma. In terms of biological role, probable ATPase of unknown function. Its presence in a non-photosynthetic plant (Epifagus virginiana) and experiments in tobacco indicate that it has an essential function which is probably not related to photosynthesis. The sequence is that of Protein Ycf2 from Arabidopsis thaliana (Mouse-ear cress).